The following is a 94-amino-acid chain: Integration host factor subunit beta (94 aa).

This sequence belongs to the bacterial histone-like protein family. In terms of assembly, heterodimer of an alpha and a beta chain.

In terms of biological role, this protein is one of the two subunits of integration host factor, a specific DNA-binding protein that functions in genetic recombination as well as in transcriptional and translational control. The protein is Integration host factor subunit beta of Vibrio atlanticus (strain LGP32) (Vibrio splendidus (strain Mel32)).